The sequence spans 229 residues: uncharacterized protein (229 aa).

This is an uncharacterized protein from Sulfolobus islandicus filamentous virus (isolate Iceland/Hveragerdi) (SIFV).